Consider the following 84-residue polypeptide: Magnetosome protein MamR (84 aa).

It belongs to the magnetosome MamR family.

It localises to the magnetosome. Its function is as follows. May play a role in controlling magnetite number and size but not in control of magnetite morphology. This is Magnetosome protein MamR from Paramagnetospirillum magneticum (strain ATCC 700264 / AMB-1) (Magnetospirillum magneticum).